The primary structure comprises 434 residues: Lipoyl synthase, mitochondrial (434 aa).

The transit peptide at 1–31 directs the protein to the mitochondrion; the sequence is MAASARGLRTLQSAHSSTTVPRLQLAVSRCY. A compositionally biased stretch (low complexity) spans 34–54; that stretch reads TTSPDPPITNSSNSSNSTPTP. The interval 34–55 is disordered; that stretch reads TTSPDPPITNSSNSSNSTPTPK. [4Fe-4S] cluster contacts are provided by Cys144, Cys149, Cys155, Cys175, Cys179, Cys182, and Ser390. Residues 158–379 form the Radical SAM core domain; it reads GSSKSAATAT…KERALEMGFL (222 aa).

It belongs to the radical SAM superfamily. Lipoyl synthase family. It depends on [4Fe-4S] cluster as a cofactor.

It is found in the mitochondrion. The enzyme catalyses [[Fe-S] cluster scaffold protein carrying a second [4Fe-4S](2+) cluster] + N(6)-octanoyl-L-lysyl-[protein] + 2 oxidized [2Fe-2S]-[ferredoxin] + 2 S-adenosyl-L-methionine + 4 H(+) = [[Fe-S] cluster scaffold protein] + N(6)-[(R)-dihydrolipoyl]-L-lysyl-[protein] + 4 Fe(3+) + 2 hydrogen sulfide + 2 5'-deoxyadenosine + 2 L-methionine + 2 reduced [2Fe-2S]-[ferredoxin]. Its pathway is protein modification; protein lipoylation via endogenous pathway; protein N(6)-(lipoyl)lysine from octanoyl-[acyl-carrier-protein]: step 2/2. Functionally, catalyzes the radical-mediated insertion of two sulfur atoms into the C-6 and C-8 positions of the octanoyl moiety bound to the lipoyl domains of lipoate-dependent enzymes, thereby converting the octanoylated domains into lipoylated derivatives. The polypeptide is Lipoyl synthase, mitochondrial (Paracoccidioides brasiliensis (strain Pb03)).